We begin with the raw amino-acid sequence, 95 residues long: Aspartyl/glutamyl-tRNA(Asn/Gln) amidotransferase subunit C (95 aa).

The protein belongs to the GatC family. In terms of assembly, heterotrimer of A, B and C subunits.

The catalysed reaction is L-glutamyl-tRNA(Gln) + L-glutamine + ATP + H2O = L-glutaminyl-tRNA(Gln) + L-glutamate + ADP + phosphate + H(+). It catalyses the reaction L-aspartyl-tRNA(Asn) + L-glutamine + ATP + H2O = L-asparaginyl-tRNA(Asn) + L-glutamate + ADP + phosphate + 2 H(+). Its function is as follows. Allows the formation of correctly charged Asn-tRNA(Asn) or Gln-tRNA(Gln) through the transamidation of misacylated Asp-tRNA(Asn) or Glu-tRNA(Gln) in organisms which lack either or both of asparaginyl-tRNA or glutaminyl-tRNA synthetases. The reaction takes place in the presence of glutamine and ATP through an activated phospho-Asp-tRNA(Asn) or phospho-Glu-tRNA(Gln). The polypeptide is Aspartyl/glutamyl-tRNA(Asn/Gln) amidotransferase subunit C (Lysinibacillus sphaericus (strain C3-41)).